We begin with the raw amino-acid sequence, 314 residues long: uncharacterized protein (314 aa).

Positions 1–70 (MAGNSQRRGA…QGRHKKTDDT (70 aa)) are disordered. A compositionally biased stretch (basic residues) spans 43 to 65 (QRPHHPAGKRAAKAARQAQGRHK). S-adenosyl-L-methionine is bound by residues glycine 265, isoleucine 285, and leucine 294.

This sequence belongs to the class IV-like SAM-binding methyltransferase superfamily. RNA methyltransferase TrmH family.

This is an uncharacterized protein from Mycolicibacterium vanbaalenii (strain DSM 7251 / JCM 13017 / BCRC 16820 / KCTC 9966 / NRRL B-24157 / PYR-1) (Mycobacterium vanbaalenii).